The chain runs to 741 residues: uncharacterized protein (741 aa).

Residues 1–18 (MKTISILAFLVLARLIEA) form the signal peptide. Disordered stretches follow at residues 142 to 300 (PKVE…GNVD), 423 to 528 (EEDE…SEQG), and 646 to 681 (ETVA…VEDD). Acidic residues predominate over residues 147–165 (EEEEEEYDGEEDDDDESLT). Composition is skewed to low complexity over residues 183–197 (VEPS…STTE) and 205–266 (STTV…SSTT). Residues Asn-232 and Asn-241 are each glycosylated (N-linked (GlcNAc...) asparagine). Acidic residues predominate over residues 423 to 432 (EEDEIDETET). Residues 433–451 (TESTKTTETTKTTGPAETT) show a composition bias toward low complexity. N-linked (GlcNAc...) asparagine glycosylation is found at Asn-461 and Asn-511. Positions 500–511 (PIDESTESEEPN) are enriched in acidic residues. The segment covering 512–528 (ESVTVTGDTTTDTSEQG) has biased composition (low complexity). Residues 646–656 (ETVAPDTNSPD) show a composition bias toward polar residues. Positions 657 to 671 (ADQEQPDSVEPDNET) are enriched in acidic residues. Asn-669 carries an N-linked (GlcNAc...) asparagine glycan. A lipid anchor (GPI-anchor amidated asparagine) is attached at Asn-719. Positions 720 to 741 (AANLAGSISLSSGVLLLILMLI) are cleaved as a propeptide — removed in mature form.

The protein resides in the cell membrane. This is an uncharacterized protein from Candida albicans (strain SC5314 / ATCC MYA-2876) (Yeast).